Here is an 84-residue protein sequence, read N- to C-terminus: Acetylcholine receptor subunit alpha (84 aa).

Cysteine 7 and cysteine 21 form a disulfide bridge. 2 N-linked (GlcNAc...) asparagine glycosylation sites follow: asparagine 20 and asparagine 66. The cysteines at positions 71 and 72 are disulfide-linked.

This sequence belongs to the ligand-gated ion channel (TC 1.A.9) family. Acetylcholine receptor (TC 1.A.9.1) subfamily. Alpha-1/CHRNA1 sub-subfamily. One of the alpha chains that assemble within the acetylcholine receptor, a pentamer of two alpha chains, a beta, a delta, and a gamma (in immature muscle) or epsilon (in mature muscle) chains. The muscle heteropentamer composed of alpha-1, beta-1, delta, epsilon subunits interacts with the alpha-conotoxin ImII.

The protein localises to the postsynaptic cell membrane. Its subcellular location is the cell membrane. It carries out the reaction K(+)(in) = K(+)(out). The catalysed reaction is Na(+)(in) = Na(+)(out). Upon acetylcholine binding, the AChR responds by an extensive change in conformation that affects all subunits and leads to opening of an ion-conducting channel across the plasma membrane. In Herpestes ichneumon (Egyptian mongoose), this protein is Acetylcholine receptor subunit alpha (CHRNA1).